The following is a 292-amino-acid chain: MFDFASYHRAATLADAINLLADNPQAKLLAGGTDVLIQLHHHNDRYRHIVDIHNLAELRGITLAEDGSLRIGSATTFTQLIEDPITQRHLPALCAAATSIAGPQIRNVATYGGNICNGATSADSATPTLIYDAKLEIHSPRGVRFVPINGFHTGPGKVSLEHDEILVAFHFPPQPKEHAGSAHFKYAMRDAMDISTIGCAAHCRLDNGNFSELRLAFGVAAPTPIRCQHAEQTAQNAPLNLQTLEAISESVLQDVAPRSSWRASKEFRLHLIQTMTKKVISEAVAAAGGKLQ.

The 176-residue stretch at 1–176 (MFDFASYHRA…VAFHFPPQPK (176 aa)) folds into the FAD-binding PCMH-type domain. Residues 27-34 (KLLAGGTD), 109-113 (ATYGG), Ile-165, and Phe-184 each bind FAD.

In terms of assembly, heterotrimer of XdhA, XdhB and XdhC. FAD is required as a cofactor.

The enzyme catalyses xanthine + NAD(+) + H2O = urate + NADH + H(+). It catalyses the reaction hypoxanthine + NAD(+) + H2O = xanthine + NADH + H(+). The protein operates within purine metabolism; hypoxanthine degradation; urate from hypoxanthine: step 1/2. It functions in the pathway purine metabolism; hypoxanthine degradation; urate from hypoxanthine: step 2/2. Functionally, presumed to be a dehydrogenase, but possibly an oxidase. Participates in limited purine salvage (requires aspartate) but does not support aerobic growth on purines as the sole carbon source (purine catabolism). This chain is Putative xanthine dehydrogenase FAD-binding subunit XdhB (xdhB), found in Escherichia coli (strain K12).